Consider the following 170-residue polypeptide: Large ribosomal subunit protein uL10 (170 aa).

Belongs to the universal ribosomal protein uL10 family. As to quaternary structure, part of the ribosomal stalk of the 50S ribosomal subunit. The N-terminus interacts with L11 and the large rRNA to form the base of the stalk. The C-terminus forms an elongated spine to which L12 dimers bind in a sequential fashion forming a multimeric L10(L12)X complex.

In terms of biological role, forms part of the ribosomal stalk, playing a central role in the interaction of the ribosome with GTP-bound translation factors. This Chlamydia abortus (strain DSM 27085 / S26/3) (Chlamydophila abortus) protein is Large ribosomal subunit protein uL10.